The primary structure comprises 433 residues: Histidinol dehydrogenase 2 (433 aa).

Positions 130, 192, and 215 each coordinate NAD(+). Substrate-binding residues include Ser238, Gln260, and His263. The Zn(2+) site is built by Gln260 and His263. Active-site proton acceptor residues include Glu328 and His329. Positions 329, 362, 416, and 421 each coordinate substrate. Asp362 is a Zn(2+) binding site. His421 is a binding site for Zn(2+).

It belongs to the histidinol dehydrogenase family. Requires Zn(2+) as cofactor.

It catalyses the reaction L-histidinol + 2 NAD(+) + H2O = L-histidine + 2 NADH + 3 H(+). It participates in amino-acid biosynthesis; L-histidine biosynthesis; L-histidine from 5-phospho-alpha-D-ribose 1-diphosphate: step 9/9. Functionally, catalyzes the sequential NAD-dependent oxidations of L-histidinol to L-histidinaldehyde and then to L-histidine. The sequence is that of Histidinol dehydrogenase 2 from Trichormus variabilis (strain ATCC 29413 / PCC 7937) (Anabaena variabilis).